Reading from the N-terminus, the 277-residue chain is MIKLGSHVSFKKPNYLAGAAGESINNKANTMMIYLGAPQTTKRVEFELYKKQEYLDFYAKDIPAEDIIVHAPYIINPANPTKAKFSCDFLIQEINRMNYINAKYLVLHPGAYTEFAPQEALDQLVKSLTHILSKTKDVVICIETMAGKGTEIGINFEQISYLINKLNSDRIAICLDTCHLWDAGYNLKDYQSFKDELKKWNLLKHVKVIHLNDSKNELSSHKDRHANIDQGHIGLETLAKFVHDKDFDNIPIILETPYVDNKPIYDVEIQMLLNKKP.

The Zn(2+) site is built by H70, H108, E143, D176, H179, H210, D223, H225, and E255.

The protein belongs to the AP endonuclease 2 family. Requires Zn(2+) as cofactor.

The enzyme catalyses Endonucleolytic cleavage to 5'-phosphooligonucleotide end-products.. Endonuclease IV plays a role in DNA repair. It cleaves phosphodiester bonds at apurinic or apyrimidinic (AP) sites, generating a 3'-hydroxyl group and a 5'-terminal sugar phosphate. This is Probable endonuclease 4 from Mycoplasmopsis synoviae (strain 53) (Mycoplasma synoviae).